Here is a 419-residue protein sequence, read N- to C-terminus: Serine hydroxymethyltransferase (419 aa).

(6S)-5,6,7,8-tetrahydrofolate contacts are provided by residues leucine 121 and 125-127 (GHL). Lysine 229 bears the N6-(pyridoxal phosphate)lysine mark. 354-356 (SPF) contacts (6S)-5,6,7,8-tetrahydrofolate.

It belongs to the SHMT family. As to quaternary structure, homodimer. The cofactor is pyridoxal 5'-phosphate.

It localises to the cytoplasm. It carries out the reaction (6R)-5,10-methylene-5,6,7,8-tetrahydrofolate + glycine + H2O = (6S)-5,6,7,8-tetrahydrofolate + L-serine. It functions in the pathway one-carbon metabolism; tetrahydrofolate interconversion. Its pathway is amino-acid biosynthesis; glycine biosynthesis; glycine from L-serine: step 1/1. In terms of biological role, catalyzes the reversible interconversion of serine and glycine with tetrahydrofolate (THF) serving as the one-carbon carrier. This reaction serves as the major source of one-carbon groups required for the biosynthesis of purines, thymidylate, methionine, and other important biomolecules. Also exhibits THF-independent aldolase activity toward beta-hydroxyamino acids, producing glycine and aldehydes, via a retro-aldol mechanism. The polypeptide is Serine hydroxymethyltransferase (Coxiella burnetii (strain RSA 493 / Nine Mile phase I)).